A 118-amino-acid polypeptide reads, in one-letter code: Large ribosomal subunit protein bL20 (118 aa).

Belongs to the bacterial ribosomal protein bL20 family.

Functionally, binds directly to 23S ribosomal RNA and is necessary for the in vitro assembly process of the 50S ribosomal subunit. It is not involved in the protein synthesizing functions of that subunit. In Shigella dysenteriae serotype 1 (strain Sd197), this protein is Large ribosomal subunit protein bL20.